We begin with the raw amino-acid sequence, 201 residues long: Holliday junction branch migration complex subunit RuvA (201 aa).

A domain I region spans residues 1-64; that stretch reads MIGRLRGTLA…EDAQLLYGFA (64 aa). The segment at 65-143 is domain II; that stretch reads EKRERELFRE…AWESMPAIAT (79 aa). Positions 144-152 are flexible linker; sequence LVVEPGSKT. The domain III stretch occupies residues 153–201; sequence AVTSAENDAVSALISLGFKPQEASRAVSAIQEENLSSEEMIRRALKGMV.

It belongs to the RuvA family. In terms of assembly, homotetramer. Forms an RuvA(8)-RuvB(12)-Holliday junction (HJ) complex. HJ DNA is sandwiched between 2 RuvA tetramers; dsDNA enters through RuvA and exits via RuvB. An RuvB hexamer assembles on each DNA strand where it exits the tetramer. Each RuvB hexamer is contacted by two RuvA subunits (via domain III) on 2 adjacent RuvB subunits; this complex drives branch migration. In the full resolvosome a probable DNA-RuvA(4)-RuvB(12)-RuvC(2) complex forms which resolves the HJ.

It localises to the cytoplasm. The RuvA-RuvB-RuvC complex processes Holliday junction (HJ) DNA during genetic recombination and DNA repair, while the RuvA-RuvB complex plays an important role in the rescue of blocked DNA replication forks via replication fork reversal (RFR). RuvA specifically binds to HJ cruciform DNA, conferring on it an open structure. The RuvB hexamer acts as an ATP-dependent pump, pulling dsDNA into and through the RuvAB complex. HJ branch migration allows RuvC to scan DNA until it finds its consensus sequence, where it cleaves and resolves the cruciform DNA. The chain is Holliday junction branch migration complex subunit RuvA from Stutzerimonas stutzeri (strain A1501) (Pseudomonas stutzeri).